The primary structure comprises 781 residues: Cytosolic phospholipase A2 beta (781 aa).

One can recognise a C2 domain in the interval 1–112; the sequence is MAVAEVSRTC…RAGEFRRESF (112 aa). Ca(2+)-binding residues include D26, D32, D82, D84, and D90. One can recognise a PLA2c domain in the interval 246–781; that stretch reads EAGLRELAVR…VQRRRQRRPH (536 aa). Residue S335 is the Nucleophile of the active site. Residue D615 is the Proton acceptor of the active site.

Requires Ca(2+) as cofactor. As to expression, widely expressed. Expressed at higher level in brain, heart, liver, cerebellum and pancreas.

It localises to the cytoplasm. Its subcellular location is the cytosol. It is found in the mitochondrion membrane. The protein resides in the early endosome membrane. The enzyme catalyses a 1,2-diacyl-sn-glycero-3-phosphocholine + H2O = a 1-acyl-sn-glycero-3-phosphocholine + a fatty acid + H(+). The catalysed reaction is a 1-acyl-sn-glycero-3-phosphocholine + H2O = sn-glycerol 3-phosphocholine + a fatty acid + H(+). It catalyses the reaction 1-hexadecanoyl-2-(9Z,12Z-octadecadienoyl)-sn-glycero-3-phosphoethanolamine + H2O = 1-hexadecanoyl-sn-glycero-3-phosphoethanolamine + (9Z,12Z)-octadecadienoate + H(+). It carries out the reaction 1-hexadecanoyl-2-(5Z,8Z,11Z,14Z-eicosatetraenoyl)-sn-glycero-3-phosphoethanolamine + H2O = 1-hexadecanoyl-sn-glycero-3-phosphoethanolamine + (5Z,8Z,11Z,14Z)-eicosatetraenoate + H(+). The enzyme catalyses 1-hexadecanoyl-sn-glycero-3-phosphocholine + H2O = sn-glycerol 3-phosphocholine + hexadecanoate + H(+). The catalysed reaction is 1-hexadecanoyl-2-(5Z,8Z,11Z,14Z-eicosatetraenoyl)-sn-glycero-3-phosphocholine + H2O = 1-hexadecanoyl-sn-glycero-3-phosphocholine + (5Z,8Z,11Z,14Z)-eicosatetraenoate + H(+). It catalyses the reaction 1-hexadecanoyl-2-(5Z,8Z,11Z,14Z-eicosatetraenoyl)-sn-glycero-3-phosphocholine + H2O = 2-(5Z,8Z,11Z,14Z)-eicosatetraenoyl-sn-glycero-3-phosphocholine + hexadecanoate + H(+). With respect to regulation, stimulated by cytosolic Ca(2+). Calcium-dependent phospholipase A1 and A2 and lysophospholipase that may play a role in membrane phospholipid remodeling. Its function is as follows. Calcium-dependent phospholipase A2 and lysophospholipase. Cleaves the ester bond of the fatty acyl group attached to the sn-2 position of phosphatidylethanolamines, producing lysophospholipids that may be used in deacylation-reacylation cycles. Hydrolyzes lysophosphatidylcholines with low efficiency but is inefficient toward phosphatidylcholines. Functionally, calcium-dependent phospholipase A1 and A2 and lysophospholipase. Cleaves the ester bond of the fatty acyl group attached to the sn-1 or sn-2 position of diacyl phospholipids (phospholipase A1 and A2 activity, respectively), producing lysophospholipids that may be used in deacylation-reacylation cycles. Can further hydrolyze lysophospholipids enabling complete deacylation. Has no activity toward alkylacyl phospholipids. The chain is Cytosolic phospholipase A2 beta (PLA2G4B) from Homo sapiens (Human).